Here is a 726-residue protein sequence, read N- to C-terminus: ORC ubiquitin ligase 1 (726 aa).

Residues 18–56 (CHICLGKVRQPVICINNHVFCSICIDLWLKNNSQCPACR) form an RING-type; degenerate zinc finger. Coiled coils occupy residues 87 to 129 (LRKT…TILD) and 155 to 270 (ETVA…MNSI). Phosphoserine is present on serine 210. Disordered regions lie at residues 276 to 334 (SADG…TSKA) and 436 to 460 (NVSN…ECFS). Positions 280–290 (KGSKGSEEDVV) are enriched in basic and acidic residues. Low complexity predominate over residues 304–318 (SSTSSSSHLAKPSSS). Over residues 319 to 334 (RLCDTSSARQESTSKA) the composition is skewed to polar residues. Basic and acidic residues predominate over residues 446–457 (DISRSENEKKSE). 5 positions are modified to phosphoserine: serine 526, serine 553, serine 561, serine 568, and serine 570. 2 disordered regions span residues 570–602 (SSQG…DQLE) and 687–726 (QSPW…ATKS). Residues 579-588 (EPDKLEEKTE) are compositionally biased toward basic and acidic residues. Polar residues predominate over residues 589 to 602 (LNLSKGSLTNDQLE). Low complexity predominate over residues 713–726 (SSLSSASPSKATKS). A phosphoserine mark is found at serine 719 and serine 721.

As to quaternary structure, associates with ORC complex. Binds to chromatin; association is cell cycle-regulated, absent from mitotic chromosomes, is associated with chromatin from G1 and partially released from chromatin from mid S-phase. Post-translationally, auto-ubiquitinated.

Its subcellular location is the chromosome. The catalysed reaction is S-ubiquitinyl-[E2 ubiquitin-conjugating enzyme]-L-cysteine + [acceptor protein]-L-lysine = [E2 ubiquitin-conjugating enzyme]-L-cysteine + N(6)-ubiquitinyl-[acceptor protein]-L-lysine.. Functionally, E3 ubiquitin ligase essential for DNA replication origin activation during S phase. Acts as a replication origin selector which selects the origins to be fired and catalyzes the multi-mono-ubiquitination of a subset of chromatin-bound ORC3 and ORC5 during S-phase. This chain is ORC ubiquitin ligase 1, found in Homo sapiens (Human).